A 253-amino-acid chain; its full sequence is DNA repair protein RecO (253 aa).

It belongs to the RecO family.

Its function is as follows. Involved in DNA repair and RecF pathway recombination. This Streptococcus agalactiae serotype Ia (strain ATCC 27591 / A909 / CDC SS700) protein is DNA repair protein RecO.